A 289-amino-acid polypeptide reads, in one-letter code: Mitochondrial fission regulator 1-like (289 aa).

A Phosphothreonine modification is found at Thr27. 8 positions are modified to phosphoserine: Ser38, Ser100, Ser107, Ser221, Ser222, Ser235, Ser258, and Ser270.

The protein belongs to the MTFR1 family. In terms of processing, phosphorylated by AMPK. Upon stress, phosphorylation by AMPK is sufficient to induce mitochondrial fragmentation.

It localises to the mitochondrion outer membrane. Its function is as follows. Mitochondrial protein required for adaptation of miochondrial dynamics to metabolic changes. Regulates mitochondrial morphology at steady state and mediates AMPK-dependent stress-induced mitochondrial fragmentation via the control of OPA1 levels. This Bos taurus (Bovine) protein is Mitochondrial fission regulator 1-like (MTFR1L).